We begin with the raw amino-acid sequence, 290 residues long: uncharacterized protein (290 aa).

Residues 153 to 178 (EMVPITTSSTTPRSKGDEATSTGAFP) form a disordered region. Residues 157–178 (ITTSSTTPRSKGDEATSTGAFP) show a composition bias toward polar residues. A helical transmembrane segment spans residues 202–222 (LIAVTLLLGGAAIIVFVIFEV). The interval 246-276 (KEEDQKPGTTESQLDSQPEKVKHNVPNSSDS) is disordered. The segment covering 252–261 (PGTTESQLDS) has biased composition (polar residues).

The protein resides in the membrane. This is an uncharacterized protein from Mus musculus (Mouse).